The chain runs to 5430 residues: Microtubule-actin cross-linking factor 1 (5430 aa).

A disordered region spans residues 1–47 (MSSSDEETLSERSCRSERSCRSERSYRSERSGSLSPCPPGDTLPWNL). The actin-binding stretch occupies residues 1-295 (MSSSDEETLS…VITYVSSIYD (295 aa)). A Phosphoserine modification is found at Ser-4. The segment covering 9–30 (LSERSCRSERSCRSERSYRSER) has biased composition (basic and acidic residues). Phosphoserine occurs at positions 35 and 57. Calponin-homology (CH) domains follow at residues 78-181 (RVQK…LHFQ) and 194-298 (MSAK…DAFP). 2 LRR repeats span residues 148 to 171 (QRQV…LTLG) and 240 to 264 (LVDM…VAER). Ser-280 carries the post-translational modification Phosphoserine. 2 LRR repeats span residues 377–399 (LYKL…YHPN) and 441–464 (LNCE…LESG). Residues 868-925 (KSTLSVKAICDYRQIEITICKNDECVLEDNSQRTKWKVISPTGNEAMVPSVCLLIPPP) form the SH3 domain. Residues 1050-1073 (ISELKNIRLRLEECEQRLLKQIQS) form an LRR 5 repeat. The residue at position 1122 (Ser-1122) is a Phosphoserine. LRR repeat units lie at residues 1128-1154 (ATTL…VCLN), 1187-1210 (PADL…VKDK), and 1257-1282 (HRVI…DYRA). 2 positions are modified to phosphoserine: Ser-1367 and Ser-1376. 2 LRR repeats span residues 1579–1602 (QQEL…IQNH) and 1629–1653 (LTAL…TREA). Spectrin repeat units lie at residues 1816 to 1891 (ELQK…NFEE) and 1933 to 2041 (QYQQ…ALLQ). The residue at position 1860 (Ser-1860) is a Phosphoserine. The LRR 11 repeat unit spans residues 1869–1891 (KGDLRFVTISGQKVLETENNFEE). 2 LRR repeats span residues 2058 to 2083 (LQSM…LIQE) and 2194 to 2220 (IQEL…ALGS). Residues 2399–2507 (RMEEVQKEAS…TVARQKQLEE (109 aa)) form a Spectrin 3 repeat. 2 positions are modified to phosphoserine: Ser-2429 and Ser-2454. LRR repeat units follow at residues 2444–2467 (KAFL…LAGL), 2534–2557 (GVLG…QFML), and 2702–2725 (KKRL…RMNR). Spectrin repeat units follow at residues 2733–2837 (TQQF…SRLK) and 2842–2945 (KAQK…SLEE). A phosphoserine mark is found at Ser-2769 and Ser-2895. LRR repeat units lie at residues 2984–3009 (NKNL…YLRD), 3105–3127 (NKIQ…MLEE), and 3214–3237 (KEQV…LIQS). Spectrin repeat units follow at residues 3169–3274 (EDFY…QLQE), 3281–3383 (KFQD…QLED), 3388–3491 (AKQF…SLLE), 3714–3818 (RSQQ…ARLE), 3825–3927 (NQFW…ALDE), 4047–4152 (LAEK…KLED), 4157–4261 (AVQY…HKLE), 4267–4370 (LGQF…QQLQ), 4375–4481 (QAQG…KLEE), 4486–4589 (ATEF…RSLD), 4594–4700 (RAKQ…KLEE), 4707–4808 (QFMD…RLEQ), and 4812–4916 (QAEE…QRLE). Thr-3368 bears the Phosphothreonine mark. LRR repeat units lie at residues 3737–3761 (MALG…AFSI) and 3846–3870 (AQLP…QLRE). A Phosphoserine modification is found at Ser-4074. Lys-4252 carries the N6-acetyllysine modification. The stretch at 4538-4561 (RDQIIELDQTGNQLKFLSQKQDVV) is one LRR 22 repeat. The tract at residues 4993 to 5023 (PTHAPFIEKSRSGSRKSLNQPTPPPMPILSQ) is disordered. The residue at position 5009 (Ser-5009) is a Phosphoserine. 2 consecutive EF-hand domains span residues 5083–5118 (HKKS…SKFP) and 5119–5154 (TTKL…NKDA). Residues Asp-5096, Asp-5098, Asp-5100, Lys-5102, Glu-5107, Asp-5132, Asp-5134, Asp-5136, Tyr-5138, and Glu-5143 each coordinate Ca(2+). The GAR domain occupies 5159 to 5231 (TDADKIEDEV…EFLVKNDPCR (73 aa)). Residues 5159–5430 (TDADKIEDEV…ASPRTPCPKR (272 aa)) are C-terminal tail. Residues 5247–5430 (PEGASQGMTP…ASPRTPCPKR (184 aa)) form a disordered region. Residues 5267–5301 (SSRAASPTRSSSSASQSNHSCTSMPSSPATPASGT) show a composition bias toward low complexity. Residue Thr-5296 is modified to Phosphothreonine. Residues 5317 to 5341 (TFHSSRTSLAGDTSNSSSPASTGAK) show a composition bias toward polar residues. Ser-5321 and Ser-5334 each carry phosphoserine. Low complexity predominate over residues 5352-5366 (SRPGSRAGSRAGSRA). Positions 5355–5370 (GSRAGSRAGSRASSRR) are 4 X 4 AA tandem repeats of [GS]-S-R-[AR]. 2 positions are modified to phosphoserine: Ser-5372 and Ser-5375. Residues 5381–5391 (ETQSACSDTSE) are compositionally biased toward polar residues. Residues 5392 to 5403 (SSAAGGQGSSRR) show a composition bias toward low complexity.

This sequence belongs to the plakin or cytolinker family. Interacts with MAPRE1, CLASP1, CLASP2 and GOLGA4. Interacts with AXIN1 and LRP6. Found in a complex composed of MACF1, APC; AXIN1, CTNNB1 and GSK3B. Interacts with CAMSAP3. Phosphorylated on serine residues in the C-terminal tail by GSK3B. Phosphorylation inhibits microtubule-binding and this plays a critical role in bulge stem cell migration and skin wound repair. Wnt-signaling can repress phosphorylation.

The protein resides in the cytoplasm. The protein localises to the cytoskeleton. It is found in the golgi apparatus. Its subcellular location is the cell membrane. It localises to the cell projection. The protein resides in the ruffle membrane. The protein localises to the membrane. F-actin-binding protein which plays a role in cross-linking actin to other cytoskeletal proteins and also binds to microtubules. Plays an important role in ERBB2-dependent stabilization of microtubules at the cell cortex. Acts as a positive regulator of Wnt receptor signaling pathway and is involved in the translocation of AXIN1 and its associated complex (composed of APC, CTNNB1 and GSK3B) from the cytoplasm to the cell membrane. Has actin-regulated ATPase activity and is essential for controlling focal adhesions (FAs) assembly and dynamics. Interaction with CAMSAP3 at the minus ends of non-centrosomal microtubules tethers microtubules minus-ends to actin filaments, regulating focal adhesion size and cell migration. May play role in delivery of transport vesicles containing GPI-linked proteins from the trans-Golgi network through its interaction with GOLGA4. Plays a key role in wound healing and epidermal cell migration. Required for efficient upward migration of bulge cells in response to wounding and this function is primarily rooted in its ability to coordinate microtubule dynamics and polarize hair follicle stem cells. As a regulator of actin and microtubule arrangement and stabilization, it plays an essential role in neurite outgrowth, branching and spine formation during brain development. This Rattus norvegicus (Rat) protein is Microtubule-actin cross-linking factor 1.